We begin with the raw amino-acid sequence, 293 residues long: Acetylglutamate kinase (293 aa).

Substrate-binding positions include 67 to 68, arginine 89, and asparagine 190; that span reads GG.

This sequence belongs to the acetylglutamate kinase family. ArgB subfamily.

Its subcellular location is the cytoplasm. It catalyses the reaction N-acetyl-L-glutamate + ATP = N-acetyl-L-glutamyl 5-phosphate + ADP. It participates in amino-acid biosynthesis; L-arginine biosynthesis; N(2)-acetyl-L-ornithine from L-glutamate: step 2/4. Its function is as follows. Catalyzes the ATP-dependent phosphorylation of N-acetyl-L-glutamate. This chain is Acetylglutamate kinase, found in Nitrosospira multiformis (strain ATCC 25196 / NCIMB 11849 / C 71).